A 482-amino-acid polypeptide reads, in one-letter code: Coagulation factor X (482 aa).

Residues 1 to 20 form the signal peptide; it reads MESPVRLSLLYVVLASLLLP. Positions 21–40 are excised as a propeptide; the sequence is GRSVFINRERANNVLQRIRR. The region spanning 41–85 is the Gla domain; that stretch reads ANSFFEEIKKGNLERECVEEICSFEEAREVFEDNEKTTEFWNKYE. 4-carboxyglutamate occurs at positions 46, 47, 54, 56, 59, 60, 65, 66, 69, 72, 75, and 79. Cys-57 and Cys-62 are joined by a disulfide. The region spanning 86–122 is the EGF-like 1; calcium-binding domain; sequence DGDQCESSPCQNQGECRDGLGSYTCTCTEGFEGKNCE. 11 cysteine pairs are disulfide-bonded: Cys-90–Cys-101, Cys-95–Cys-110, Cys-112–Cys-121, Cys-129–Cys-140, Cys-136–Cys-149, Cys-151–Cys-164, Cys-172–Cys-340, Cys-238–Cys-243, Cys-259–Cys-275, Cys-388–Cys-402, and Cys-413–Cys-441. Asp-103 bears the (3R)-3-hydroxyaspartate mark. The EGF-like 2 domain maps to 125-165; it reads VRKLCSLDNGDCDQFCREEQNSVVCSCAKGYFLGNDGKSCL. Positions 184-231 are cleaved as a propeptide — activation peptide; sequence VALNTSNSEPDPEDLMPDADILYPTESPSELLNLNKTEPEANSDDVIR. 2 N-linked (GlcNAc...) asparagine glycosylation sites follow: Asn-187 and Asn-218. In terms of domain architecture, Peptidase S1 spans 232–465; the sequence is IVGGQECKRG…FLKWIDRSMK (234 aa). Catalysis depends on charge relay system residues His-274 and Asp-320. The active-site Charge relay system is Ser-417.

Belongs to the peptidase S1 family. In terms of assembly, the two chains are formed from a single-chain precursor by the excision of two Arg residues and are held together by 1 or more disulfide bonds. Forms a heterodimer with SERPINA5. Interacts with ixolaris, an anticoagulant protein from Ixodes scapularis saliva. The vitamin K-dependent, enzymatic carboxylation of some glutamate residues allows the modified protein to bind calcium. In terms of processing, N- and O-glycosylated. Post-translationally, proteolytically cleaved and activated by cathepsin CTSG. The activation peptide is cleaved by factor IXa (in the intrinsic pathway), or by factor VIIa (in the extrinsic pathway). The iron and 2-oxoglutarate dependent 3-hydroxylation of aspartate and asparagine is (R) stereospecific within EGF domains. As to expression, plasma; synthesized in the liver.

It localises to the secreted. The catalysed reaction is Selective cleavage of Arg-|-Thr and then Arg-|-Ile bonds in prothrombin to form thrombin.. Its activity is regulated as follows. Inhibited by SERPINA5. Factor Xa is a vitamin K-dependent glycoprotein that converts prothrombin to thrombin in the presence of factor Va, calcium and phospholipid during blood clotting. Factor Xa activates pro-inflammatory signaling pathways in a protease-activated receptor (PAR)-dependent manner. The sequence is that of Coagulation factor X (F10) from Rattus norvegicus (Rat).